Here is a 165-residue protein sequence, read N- to C-terminus: MRVLFLIYLILSPFGAEARTLLENHEGLNVGSGYGRGANLPPPSPASSPPSKEVSNSVSPTRTDEKTSENTELVMTTIAQGENINQLFSFPTSADNYYQLASFKKLFISYLLPVSYVWNLIGSSSFDHDLVDIFDSKSDERYWNRKPLSPPSPKPADGQRPLHSY.

Residues 1–18 (MRVLFLIYLILSPFGAEA) form the signal peptide. Positions 19–35 (RTLLENHEGLNVGSGYG) are excised as a propeptide. 2 disordered regions span residues 33 to 70 (GYGR…TSEN) and 142 to 165 (YWNR…LHSY). 5 positions are modified to 4-hydroxyproline: Pro42, Pro43, Pro45, Pro49, and Pro50. O-linked (Ara...) hydroxyproline glycans are attached at residues Pro42, Pro43, Pro45, Pro49, and Pro50. Residues 54–143 (VSNSVSPTRT…FDSKSDERYW (90 aa)) constitute a propeptide that is removed on maturation. Residues Pro150, Pro151, and Pro153 each carry the 4-hydroxyproline modification. 3 O-linked (Ara...) hydroxyproline glycosylation sites follow: Pro150, Pro151, and Pro153. The propeptide occupies 162–165 (LHSY).

O-glycosylated; contains pentose side chains. Expressed in leaves.

The protein resides in the secreted. Activates a lipid-based signal transduction pathway in which linolenic acid is converted to jasmonic acid, a potent activator of defense gene transcription, including proteinase inhibitors. This is Hydroxyproline-rich systemin A from Nicotiana tabacum (Common tobacco).